A 453-amino-acid polypeptide reads, in one-letter code: DNA repair protein RadA (453 aa).

The segment at 10 to 27 (CQECGYQSPKYLGRCPNC) adopts a C4-type zinc-finger fold. 95-102 (GDPGIGKS) is a binding site for ATP. The short motif at 251–255 (KNRFG) is the RadA KNRFG motif element. The segment at 350–453 (DAYLKSAGGV…VGQVLKAVFS (104 aa)) is lon-protease-like.

Belongs to the RecA family. RadA subfamily.

Its function is as follows. DNA-dependent ATPase involved in processing of recombination intermediates, plays a role in repairing DNA breaks. Stimulates the branch migration of RecA-mediated strand transfer reactions, allowing the 3' invading strand to extend heteroduplex DNA faster. Binds ssDNA in the presence of ADP but not other nucleotides, has ATPase activity that is stimulated by ssDNA and various branched DNA structures, but inhibited by SSB. Does not have RecA's homology-searching function. This is DNA repair protein RadA from Streptococcus pyogenes serotype M6 (strain ATCC BAA-946 / MGAS10394).